The chain runs to 383 residues: tRNA (guanine-N(7)-)-methyltransferase non-catalytic subunit wuho (383 aa).

5 WD repeats span residues 61-101 (NLEV…ALLL), 105-144 (ALAR…APPK), 148-187 (GHLS…DIHS), 191-231 (GHKE…EVLQ), and 289-329 (AGSW…QAES).

This sequence belongs to the WD repeat TRM82 family. Forms a heterodimer with the catalytic subunit Mettl1. Interacts with mei-P26 and weakly interacts with bgcn; required for the function or formation of the mei-P26-bgcn-bam-sxl complex. Interacts with nanos; may be involved in mei-P26-dependent derepression of the BMP signaling pathway. Interacts with Myc; the interaction may be mediated by mei-P26 and may be involved in the regulation of ribosome biogenesis. In terms of tissue distribution, in testis, it is present at high level in hub cells, a niche for germline stem cells of testis. Ubiquitously expressed in all testicular cells throughout spermatogenesis. Ubiquitously expressed in all germline and somatic cells of the ovary.

It localises to the nucleus. Its subcellular location is the cytoplasm. The protein operates within tRNA modification; N(7)-methylguanine-tRNA biosynthesis. Its function is as follows. Required for the Mettl1-dependent formation of N(7)-methylguanine at position 46 (m7G46) in tRNA. In the Mettl1-wuho methyltransferase complex, it is required to stabilize and induce conformational changes of the catalytic subunit. Required for binding of nanos mRNA and repression of translation by the mei-P26-bgcn-bam-sxl complex. May cooperate with mei-P26 and nanos to derepress the BMP signaling pathway. May cooperate with mei-P26 to suppress expression of a subset of microRNAs. May cooperate with mei-P26 to regulate bam expression levels in germline cells during gametogenesis. Required to promote mitosis to meiosis transition during gametogenesis. May regulate germline cell division in part by regulating ribosome biogenesis. The chain is tRNA (guanine-N(7)-)-methyltransferase non-catalytic subunit wuho from Drosophila mojavensis (Fruit fly).